The chain runs to 324 residues: IDS-like terpene synthase 1 (324 aa).

The Mg(2+) site is built by Asp-77 and Asp-81.

It belongs to the FPP/GGPP synthase family. The cofactor is Mg(2+).

The enzyme catalyses (2E)-geranyl diphosphate = (E)-beta-ocimene + diphosphate. It carries out the reaction (2E)-geranyl diphosphate + H2O = linalool + diphosphate. The catalysed reaction is (2E,6E)-farnesyl diphosphate = (3E,6E)-alpha-farnesene + diphosphate. It catalyses the reaction (2E,6E,10E)-geranylgeranyl diphosphate = (E,E,E)-alpha-springene + diphosphate. Its function is as follows. Terpene synthase that shows monoterpene synthase activity and produces (E)-beta-ocimene as a major product and linalool as a minor product, using geranyl diphosphate (GPP) as substrate. Also shows sesquiterpene synthase activity as it is able to convert farnesyl diphosphate (FPP) into (E,E)-alpha-farnesene. Finally, TPS1 can convert geranylgeranyl diphosphate into (E,E,E)-alpha-springene. The chain is IDS-like terpene synthase 1 from Melampsora larici-populina (strain 98AG31 / pathotype 3-4-7) (Poplar leaf rust fungus).